We begin with the raw amino-acid sequence, 388 residues long: Leucine aminopeptidase 1 (388 aa).

Positions 1-19 (MKSLSLLALAAIAPPAAVA) are cleaved as a signal peptide. Positions 20–88 (AVVDHQVPFE…SVKSHERIQV (69 aa)) are excised as a propeptide. Residue Asn180 is glycosylated (N-linked (GlcNAc...) asparagine). 4 residues coordinate Zn(2+): His188, Asp207, Glu246, and Asp273. A disulfide bridge connects residues Cys322 and Cys326. Residue His355 coordinates Zn(2+).

Belongs to the peptidase M28 family. M28E subfamily. Monomer. Zn(2+) serves as cofactor.

The protein localises to the secreted. Its function is as follows. Extracellular aminopeptidase that allows assimilation of proteinaceous substrates. The chain is Leucine aminopeptidase 1 (LAP1) from Coccidioides posadasii (strain RMSCC 757 / Silveira) (Valley fever fungus).